The primary structure comprises 221 residues: 2-amino-5-formylamino-6-ribosylaminopyrimidin-4(3H)-one 5'-monophosphate deformylase (221 aa).

Fe cation-binding residues include glutamate 29, histidine 31, aspartate 40, and histidine 108.

It belongs to the creatininase superfamily. FAPy deformylase family. In terms of assembly, homodimer. Fe(2+) serves as cofactor. Requires Zn(2+) as cofactor.

The catalysed reaction is 2-amino-5-formylamino-6-(5-phospho-D-ribosylamino)pyrimidin-4(3H)-one + H2O = 2,5-diamino-6-(1-D-ribosylamino)pyrimidin-4(3H)-one 5'-phosphate + formate + H(+). The protein operates within cofactor biosynthesis; coenzyme F420 biosynthesis. It participates in cofactor biosynthesis; riboflavin biosynthesis. Its function is as follows. Catalyzes the hydrolysis of the formamide of 2-amino-5-formylamino-6-ribosylamino-4(3H)-pyrimidinone 5'-monophosphate (FAPy) to form 2,5-diamino-6-ribosylamino-4(3H)-pyrimidinone 5'-phosphate (APy). In Methanococcus maripaludis (strain C5 / ATCC BAA-1333), this protein is 2-amino-5-formylamino-6-ribosylaminopyrimidin-4(3H)-one 5'-monophosphate deformylase.